The primary structure comprises 308 residues: Acetyl-coenzyme A carboxylase carboxyl transferase subunit alpha (308 aa).

Positions Glu36–Glu286 constitute a CoA carboxyltransferase C-terminal domain.

This sequence belongs to the AccA family. Acetyl-CoA carboxylase is a heterohexamer composed of biotin carboxyl carrier protein (AccB), biotin carboxylase (AccC) and two subunits each of ACCase subunit alpha (AccA) and ACCase subunit beta (AccD).

The protein localises to the cytoplasm. The enzyme catalyses N(6)-carboxybiotinyl-L-lysyl-[protein] + acetyl-CoA = N(6)-biotinyl-L-lysyl-[protein] + malonyl-CoA. It participates in lipid metabolism; malonyl-CoA biosynthesis; malonyl-CoA from acetyl-CoA: step 1/1. Functionally, component of the acetyl coenzyme A carboxylase (ACC) complex. First, biotin carboxylase catalyzes the carboxylation of biotin on its carrier protein (BCCP) and then the CO(2) group is transferred by the carboxyltransferase to acetyl-CoA to form malonyl-CoA. This is Acetyl-coenzyme A carboxylase carboxyl transferase subunit alpha from Helicobacter hepaticus (strain ATCC 51449 / 3B1).